We begin with the raw amino-acid sequence, 496 residues long: Probable cytosol aminopeptidase (496 aa).

Mn(2+)-binding residues include lysine 252 and aspartate 257. Residue lysine 264 is part of the active site. Residues aspartate 275, aspartate 334, and glutamate 336 each contribute to the Mn(2+) site. Arginine 338 is an active-site residue.

Belongs to the peptidase M17 family. The cofactor is Mn(2+).

It is found in the cytoplasm. It catalyses the reaction Release of an N-terminal amino acid, Xaa-|-Yaa-, in which Xaa is preferably Leu, but may be other amino acids including Pro although not Arg or Lys, and Yaa may be Pro. Amino acid amides and methyl esters are also readily hydrolyzed, but rates on arylamides are exceedingly low.. It carries out the reaction Release of an N-terminal amino acid, preferentially leucine, but not glutamic or aspartic acids.. In terms of biological role, presumably involved in the processing and regular turnover of intracellular proteins. Catalyzes the removal of unsubstituted N-terminal amino acids from various peptides. This Leifsonia xyli subsp. xyli (strain CTCB07) protein is Probable cytosol aminopeptidase.